Consider the following 171-residue polypeptide: MNKKNSYSYEDLLASGRGELFGEKGPQLPAPSMLMMDRVVEMNEEGGLFNKGYVEAELDINPSLSFFGCHFIGDPVMPGCLGLDAMWQLVGFYLGWIGGQGKGRALGVGEVKFTGQILPTAKKVIYRINMKRVINRKLVMGMADGEVEVDGKVIYTATDLKVGLFQDTSTF.

The active site involves His70.

Belongs to the thioester dehydratase family. FabA subfamily. Homodimer.

The protein localises to the cytoplasm. It carries out the reaction a (3R)-hydroxyacyl-[ACP] = a (2E)-enoyl-[ACP] + H2O. The catalysed reaction is (3R)-hydroxydecanoyl-[ACP] = (2E)-decenoyl-[ACP] + H2O. The enzyme catalyses (2E)-decenoyl-[ACP] = (3Z)-decenoyl-[ACP]. The protein operates within lipid metabolism; fatty acid biosynthesis. In terms of biological role, necessary for the introduction of cis unsaturation into fatty acids. Catalyzes the dehydration of (3R)-3-hydroxydecanoyl-ACP to E-(2)-decenoyl-ACP and then its isomerization to Z-(3)-decenoyl-ACP. Can catalyze the dehydratase reaction for beta-hydroxyacyl-ACPs with saturated chain lengths up to 16:0, being most active on intermediate chain length. This is 3-hydroxydecanoyl-[acyl-carrier-protein] dehydratase from Histophilus somni (strain 129Pt) (Haemophilus somnus).